Reading from the N-terminus, the 287-residue chain is Taxis protein CheF2 (287 aa).

As to quaternary structure, interacts with chemotaxis (Che) proteins as well as flagella accessory (Fla) proteins.

In terms of biological role, involved in taxis signal transduction. The sequence is that of Taxis protein CheF2 (cheF2) from Halobacterium salinarum (strain ATCC 29341 / DSM 671 / R1).